A 393-amino-acid chain; its full sequence is (S)-mandelate dehydrogenase (393 aa).

One can recognise an FMN hydroxy acid dehydrogenase domain in the interval 1–377; the sequence is MSQNLFNVED…SPDYLQNEGV (377 aa). Tyrosine 26 contacts (S)-mandelate. FMN contacts are provided by residues 79-81, serine 108, and glutamine 129; that span reads PTG. Position 131 (tyrosine 131) interacts with (S)-mandelate. Threonine 156 serves as a coordination point for FMN. Arginine 165 lines the (S)-mandelate pocket. Lysine 250 is an FMN binding site. (S)-mandelate-binding residues include histidine 274 and arginine 277. The active-site Proton acceptor is histidine 274. FMN contacts are provided by residues 303 to 307 and 326 to 327; these read DSGFR and GR.

This sequence belongs to the FMN-dependent alpha-hydroxy acid dehydrogenase family. In terms of assembly, homotetramer. Requires FMN as cofactor.

Its subcellular location is the cell inner membrane. It catalyses the reaction (S)-mandelate + A = phenylglyoxylate + AH2. It participates in aromatic compound metabolism; (R)-mandelate degradation; benzoate from (R)-mandelate: step 2/4. In terms of biological role, catalyzes the dehydrogenation of (S)-mandelate to phenylglyoxylate (benzoylformate). Is likely involved in the utilization of mandelate as a sole source of carbon and energy for growth. Active in vitro with the artificial electron acceptors 2,6-dichlorophenolindophenol (DCPIP) or ferricyanide, but in vivo most likely transfer the electron pair from the reduced flavin to a component of the electron transport chain in the membrane, possibly a quinone. Shows very low activity with oxygen as the electron acceptor, and also with 3-indolelactate and medium chain 2-hydroxyacids as substrates. The protein is (S)-mandelate dehydrogenase of Pseudomonas putida (Arthrobacter siderocapsulatus).